We begin with the raw amino-acid sequence, 244 residues long: ATP synthase subunit O, mitochondrial (244 aa).

Residues methionine 1 to tyrosine 45 constitute a mitochondrion transit peptide.

Belongs to the ATPase delta chain family. F-type ATPases have 2 components, CF(1) - the catalytic core - and CF(0) - the membrane proton channel. CF(1) has five subunits: alpha(3), beta(3), gamma(1), delta(1), epsilon(1). CF(0) has three main subunits: a, b and c.

The protein localises to the mitochondrion. It localises to the mitochondrion inner membrane. Functionally, mitochondrial membrane ATP synthase (F(1)F(0) ATP synthase or Complex V) produces ATP from ADP in the presence of a proton gradient across the membrane which is generated by electron transport complexes of the respiratory chain. F-type ATPases consist of two structural domains, F(1) - containing the extramembraneous catalytic core and F(0) - containing the membrane proton channel, linked together by a central stalk and a peripheral stalk. During catalysis, ATP synthesis in the catalytic domain of F(1) is coupled via a rotary mechanism of the central stalk subunits to proton translocation. Part of the complex F(0) domain and the peripheric stalk, which acts as a stator to hold the catalytic alpha(3)beta(3) subcomplex and subunit a/ATP6 static relative to the rotary elements. This Ipomoea batatas (Sweet potato) protein is ATP synthase subunit O, mitochondrial.